The following is a 289-amino-acid chain: Shikimate kinase (289 aa).

84-94 (PVASGLSSSSA) lines the ATP pocket.

The protein belongs to the GHMP kinase family. Archaeal shikimate kinase subfamily.

The protein resides in the cytoplasm. It carries out the reaction shikimate + ATP = 3-phosphoshikimate + ADP + H(+). Its pathway is metabolic intermediate biosynthesis; chorismate biosynthesis; chorismate from D-erythrose 4-phosphate and phosphoenolpyruvate: step 5/7. The protein is Shikimate kinase (aroK) of Methanothermobacter thermautotrophicus (strain ATCC 29096 / DSM 1053 / JCM 10044 / NBRC 100330 / Delta H) (Methanobacterium thermoautotrophicum).